Consider the following 482-residue polypeptide: ATP synthase subunit beta (482 aa).

161–168 provides a ligand contact to ATP; that stretch reads GGAGVGKT.

It belongs to the ATPase alpha/beta chains family. F-type ATPases have 2 components, CF(1) - the catalytic core - and CF(0) - the membrane proton channel. CF(1) has five subunits: alpha(3), beta(3), gamma(1), delta(1), epsilon(1). CF(0) has four main subunits: a(1), b(1), b'(1) and c(9-12).

It localises to the cellular thylakoid membrane. The catalysed reaction is ATP + H2O + 4 H(+)(in) = ADP + phosphate + 5 H(+)(out). Functionally, produces ATP from ADP in the presence of a proton gradient across the membrane. The catalytic sites are hosted primarily by the beta subunits. In Microcystis aeruginosa (strain NIES-843 / IAM M-2473), this protein is ATP synthase subunit beta.